The sequence spans 527 residues: T-complex protein 1 subunit beta (527 aa).

It belongs to the TCP-1 chaperonin family. Heterooligomeric complex of about 850 to 900 kDa that forms two stacked rings, 12 to 16 nm in diameter.

The protein resides in the cytoplasm. Functionally, molecular chaperone; assists the folding of proteins upon ATP hydrolysis. Known to play a role, in vitro, in the folding of actin and tubulin. This Arabidopsis thaliana (Mouse-ear cress) protein is T-complex protein 1 subunit beta.